Consider the following 243-residue polypeptide: Protein DMP8 (243 aa).

Residues 1–37 (MEKTEESVGIRVYTTTTTQNPSPTSSRSPKPVPLSSL) form a disordered region. A compositionally biased stretch (low complexity) spans 14 to 29 (TTTTTQNPSPTSSRSP). 4 helical membrane-spanning segments follow: residues 70–90 (MLVN…LPTI), 98–118 (GINT…CFFF), 174–194 (VNDF…AFSD), and 212–232 (VMES…LVFP).

This sequence belongs to the plant DMP1 protein family. As to expression, restricted to flowers.

The protein localises to the endoplasmic reticulum membrane. The protein resides in the vacuole membrane. In terms of biological role, involved in membrane remodeling. This is Protein DMP8 from Arabidopsis thaliana (Mouse-ear cress).